We begin with the raw amino-acid sequence, 186 residues long: tRNA (cytidine(56)-2'-O)-methyltransferase (186 aa).

S-adenosyl-L-methionine-binding positions include Leu-84 and 110-114 (GAEKV).

This sequence belongs to the aTrm56 family. As to quaternary structure, homodimer.

It is found in the cytoplasm. The enzyme catalyses cytidine(56) in tRNA + S-adenosyl-L-methionine = 2'-O-methylcytidine(56) in tRNA + S-adenosyl-L-homocysteine + H(+). Specifically catalyzes the AdoMet-dependent 2'-O-ribose methylation of cytidine at position 56 in tRNAs. The polypeptide is tRNA (cytidine(56)-2'-O)-methyltransferase (Staphylothermus marinus (strain ATCC 43588 / DSM 3639 / JCM 9404 / F1)).